Reading from the N-terminus, the 134-residue chain is Small ribosomal subunit protein uS9 (134 aa).

A disordered region spans residues 109 to 134 (KGDPRRKEPKKFGGRGARARRQKSYR). Over residues 115–134 (KEPKKFGGRGARARRQKSYR) the composition is skewed to basic residues.

It belongs to the universal ribosomal protein uS9 family.

In Methanopyrus kandleri (strain AV19 / DSM 6324 / JCM 9639 / NBRC 100938), this protein is Small ribosomal subunit protein uS9.